A 48-amino-acid polypeptide reads, in one-letter code: Thiamine thiazole synthase, chloroplastic (48 aa).

Substrate is bound by residues alanine 18 and valine 40.

It belongs to the THI4 family. Homooctamer. It depends on Fe cation as a cofactor.

The protein localises to the plastid. It localises to the chloroplast. The catalysed reaction is [ADP-thiazole synthase]-L-cysteine + glycine + NAD(+) = [ADP-thiazole synthase]-dehydroalanine + ADP-5-ethyl-4-methylthiazole-2-carboxylate + nicotinamide + 3 H2O + 2 H(+). Involved in biosynthesis of the thiamine precursor thiazole. Catalyzes the conversion of NAD and glycine to adenosine diphosphate 5-(2-hydroxyethyl)-4-methylthiazole-2-carboxylic acid (ADT), an adenylated thiazole intermediate. The reaction includes an iron-dependent sulfide transfer from a conserved cysteine residue of the protein to a thiazole intermediate. The enzyme can only undergo a single turnover, which suggests it is a suicide enzyme. May have additional roles in adaptation to various stress conditions and in DNA damage tolerance. The protein is Thiamine thiazole synthase, chloroplastic (THI1) of Populus euphratica (Euphrates poplar).